Reading from the N-terminus, the 198-residue chain is MYAVLTAIIAYLIGCINNAYILTKYTRKIDIRNYGSGNAGATNVLRVLGYKAAAPVFALDVLKGVIAVLIGKYLMGNTGAMIAGIAVVCGHNWPVFLKFRGGKGIATSVGVVMTVSPLLGLIALAIGVTVIVLTKYVSLGSITGSVTFVLLNAIFWNSTQIFIFSLILASLAIFQHRSNIKRLLAGTESKLGQKTEIK.

The next 5 membrane-spanning stretches (helical) occupy residues 2 to 22 (YAVL…AYIL), 48 to 70 (LGYK…AVLI), 75 to 97 (MGNT…PVFL), 111 to 131 (VVMT…VTVI), and 154 to 174 (IFWN…LAIF).

Belongs to the PlsY family. Probably interacts with PlsX.

The protein localises to the cell membrane. The enzyme catalyses an acyl phosphate + sn-glycerol 3-phosphate = a 1-acyl-sn-glycero-3-phosphate + phosphate. It functions in the pathway lipid metabolism; phospholipid metabolism. Its function is as follows. Catalyzes the transfer of an acyl group from acyl-phosphate (acyl-PO(4)) to glycerol-3-phosphate (G3P) to form lysophosphatidic acid (LPA). This enzyme utilizes acyl-phosphate as fatty acyl donor, but not acyl-CoA or acyl-ACP. This Thermoanaerobacter pseudethanolicus (strain ATCC 33223 / 39E) (Clostridium thermohydrosulfuricum) protein is Glycerol-3-phosphate acyltransferase.